Consider the following 55-residue polypeptide: Chromatin protein Cren7 (55 aa).

Belongs to the Cren7 family. Monomer. Post-translationally, methylated at multiple sites, to varying extents.

It localises to the chromosome. The protein localises to the cytoplasm. Functionally, a chromatin protein, binds double-stranded DNA without sequence specificity. Constrains negative DNA supercoils. The polypeptide is Chromatin protein Cren7 (Ignicoccus hospitalis (strain KIN4/I / DSM 18386 / JCM 14125)).